Consider the following 290-residue polypeptide: Phosphatidylglycerol--prolipoprotein diacylglyceryl transferase (290 aa).

7 helical membrane passes run 21-41, 60-80, 96-116, 124-144, 199-219, 226-246, and 260-280; these read VSLHWYGLMYLVGFVFAMWLA, LLYAGFLGVFIGGRVGYVLFY, WDGGMSFHGGLIGVICVMLWF, FFQVADFIAPLIPFGLGAGRL, SQLYEMILEGVVLFIILNVFI, GSVSGLFLIGYGTFRIIVECF, and ISMGQILSVPMILAGIIMMIW. Arginine 143 contacts a 1,2-diacyl-sn-glycero-3-phospho-(1'-sn-glycerol).

This sequence belongs to the Lgt family.

It localises to the cell inner membrane. The enzyme catalyses L-cysteinyl-[prolipoprotein] + a 1,2-diacyl-sn-glycero-3-phospho-(1'-sn-glycerol) = an S-1,2-diacyl-sn-glyceryl-L-cysteinyl-[prolipoprotein] + sn-glycerol 1-phosphate + H(+). The protein operates within protein modification; lipoprotein biosynthesis (diacylglyceryl transfer). In terms of biological role, catalyzes the transfer of the diacylglyceryl group from phosphatidylglycerol to the sulfhydryl group of the N-terminal cysteine of a prolipoprotein, the first step in the formation of mature lipoproteins. This Yersinia pseudotuberculosis serotype O:1b (strain IP 31758) protein is Phosphatidylglycerol--prolipoprotein diacylglyceryl transferase.